The sequence spans 345 residues: Trans-3-hydroxy-L-proline dehydratase (345 aa).

Ser90 serves as the catalytic Proton acceptor. Substrate-binding positions include 91-92 (GS), Asp252, and 257-258 (GT).

It belongs to the proline racemase family.

The catalysed reaction is trans-3-hydroxy-L-proline = 1-pyrroline-2-carboxylate + H2O. Functionally, catalyzes the dehydration of trans-3-hydroxy-L-proline (t3LHyp) to Delta(1)-pyrroline-2-carboxylate (Pyr2C). May be involved in a degradation pathway that converts t3LHyp to L-proline, which would allow S.novella to grow on t3LHyp as a sole carbon source. This chain is Trans-3-hydroxy-L-proline dehydratase, found in Ancylobacter novellus (strain ATCC 8093 / DSM 506 / JCM 20403 / CCM 1077 / IAM 12100 / NBRC 12443 / NCIMB 10456) (Starkeya novella).